The chain runs to 666 residues: Nuclear distribution protein nudE homolog 1 (666 aa).

Residues 14-195 are a coiled coil; the sequence is EEEIAHYREK…KDQLARAIAT (182 aa). Disordered regions lie at residues 40–64, 220–310, 369–388, and 397–666; these read EFQQSSKELEDEMEQELAANDKQQA, DDIN…SGIP, KRVTSTTSTTSSTTTAPAPH, and DHNT…KVKK. A compositionally biased stretch (polar residues) spans 251 to 274; it reads RSGTMSSIPVASPSTKRFSQQIPH. 2 stretches are compositionally biased toward low complexity: residues 275–287 and 372–383; these read SPSFSTLSRSTTS and TSTTSTTSSTTT. Over residues 400 to 410 the composition is skewed to polar residues; it reads TTPTAQSQQFP. 3 stretches are compositionally biased toward low complexity: residues 449–465, 473–485, and 536–554; these read PTFRSSSTTSNRSLPSR, ASGSARSTTSGTA, and SATPTSGFSSFSASASTSN. Polar residues-rich tracts occupy residues 587–599 and 614–638; these read RQSLSGAGPTPTT and SSLSNMDKPSLMSASSGSRTPSGRP.

Belongs to the nudE family. Self-associates. Interacts with PAC1.

It localises to the cytoplasm. The protein localises to the cytoskeleton. In terms of biological role, required for nuclear migration. This chain is Nuclear distribution protein nudE homolog 1 (NDE1), found in Cryptococcus neoformans var. neoformans serotype D (strain JEC21 / ATCC MYA-565) (Filobasidiella neoformans).